The following is a 239-amino-acid chain: Tetraspanin-9 (239 aa).

Over 1 to 13 the chain is Cytoplasmic; that stretch reads MARGCLCCLKYMM. The chain crosses the membrane as a helical span at residues 14–34; that stretch reads FLFNLIFWLCGCGLLGVGIWL. Over 35-55 the chain is Extracellular; it reads SVSQGNFATFSPSFPSLSAAN. The chain crosses the membrane as a helical span at residues 56-76; sequence LVIAIGTIVMVTGFLGCLGAI. Over 77–85 the chain is Cytoplasmic; it reads KENRCLLLS. Residues 86 to 106 traverse the membrane as a helical segment; that stretch reads FFIVLLIILLAELILIILFFV. Residues 107–203 are Extracellular-facing; it reads YMDKVNENAR…VKMWFDDNKH (97 aa). A glycan (N-linked (GlcNAc...) asparagine) is linked at asparagine 180. Residues 204 to 224 form a helical membrane-spanning segment; sequence VLGTVGMCILIMQILGMAFSM. Over 225 to 239 the chain is Cytoplasmic; the sequence is TLFQHIHRTGKKYDA.

This sequence belongs to the tetraspanin (TM4SF) family. Found in a complex with GP6. Post-translationally, glycosylated.

It localises to the membrane. This chain is Tetraspanin-9 (TSPAN9), found in Sus scrofa (Pig).